The sequence spans 809 residues: Protein TOC75, chloroplastic (809 aa).

The span at 1–17 (MRTSVIPNRLTPTLTTH) shows a compositional bias: polar residues. A chloroplast-targeting transit peptide spans 1–35 (MRTSVIPNRLTPTLTTHPSRRRNDHITTRTSSLKC). Residues 1-44 (MRTSVIPNRLTPTLTTHPSRRRNDHITTRTSSLKCHLSPSSGDN) form a disordered region. The transit peptide at 36–131 (HLSPSSGDNN…RILSPARAIA (96 aa)) directs the protein to the chloroplast; outer membrane. Residues 132-143 (DEPKSEDWDSHE) lie on the Chloroplast intermembrane side of the membrane. The beta stranded transmembrane segment at 144–152 (LPADITVLL) threads the bilayer. At 153–160 (GRLSGFKK) the chain is on the cytoplasmic side. A beta stranded transmembrane segment spans residues 161–169 (YKISDILFF). The Chloroplast intermembrane portion of the chain corresponds to 170-225 (DRNKKSKVETQDSFLDMVSLKPGGVYTKAQLQKELESLATCGMFEKVDMEGKTNAD). A beta stranded transmembrane segment spans residues 226 to 234 (GSLGLTISF). The Cytoplasmic segment spans residues 235-247 (AESMWERADRFRC). A beta stranded membrane pass occupies residues 248 to 254 (INVGLMG). The Chloroplast intermembrane portion of the chain corresponds to 255 to 357 (QSKPVEMDPD…VVCEVVEGDI (103 aa)). The beta stranded transmembrane segment at 358–365 (TKLSIQYL) threads the bilayer. Over 366–410 (DKLGNVVEGNTEGPVVQRELPKQLLPGHTFNIEAGKQALRNINSL) the chain is Cytoplasmic. Residues 411-418 (ALFSNIEV) traverse the membrane as a beta stranded segment. Topologically, residues 419–427 (NPRPDEMNE) are chloroplast intermembrane. Residues 428-436 (GSIIVEIKL) traverse the membrane as a beta stranded segment. The Cytoplasmic portion of the chain corresponds to 437–442 (KELEQK). A beta stranded transmembrane segment spans residues 443 to 452 (SAEVSTEWSI). Topologically, residues 453-464 (VPGRGGRPTLAS) are chloroplast intermembrane. The chain crosses the membrane as a beta stranded span at residues 465–473 (LQPGGTITF). At 474–500 (EHRNLQGLNRSLTGSVTTSNFLNPQDD) the chain is on the cytoplasmic side. A beta stranded membrane pass occupies residues 501 to 509 (LAFKMEYAH). Over 510–553 (PYLDGVDNPRNRTLRVSCFNSRKLSPVFTGGPGVDEVPSIWVDR) the chain is Chloroplast intermembrane. The beta stranded transmembrane segment at 554–561 (AGVKANIT) threads the bilayer. The Cytoplasmic segment spans residues 562–569 (ENFSRQSK). The chain crosses the membrane as a beta stranded span at residues 570–577 (FTYGLVME). Topologically, residues 578 to 684 (EIITRDESNH…VEEGAGKSPP (107 aa)) are chloroplast intermembrane. A beta stranded transmembrane segment spans residues 685–693 (PVLVLHGHY). Residues 694-705 (GGCVGDLPSYDA) are Cytoplasmic-facing. The beta stranded transmembrane segment at 706–714 (FTLGGPYSV) threads the bilayer. Residues 715–776 (RGYNMGEIGA…VYRRMGQGSS (62 aa)) lie on the Chloroplast intermembrane side of the membrane. The beta stranded transmembrane segment at 777–783 (YGAGMKL) threads the bilayer. The Cytoplasmic segment spans residues 784 to 797 (GLVRAEYAVDHNSG). The beta stranded transmembrane segment at 798-805 (TGAVFFRF) threads the bilayer. The Chloroplast intermembrane segment spans residues 806 to 809 (GERF).

This sequence belongs to the TOC75 family. Part of the TOC core complex that includes a protein for the specific recognition of transit peptides surrounded by a ring composed of four proteins forming translocation channels, and four to five GTP-binding proteins providing energy. This core complex can interact with components of the TIC complex to form a larger import complex. Chloroplastic protein precursors such as prSS (precursor of the RuBisCO small subunit) also interact with these complexes. TOC75 interacts with OEP14, TOC34/OEP34, TOC86/OEP86, TIC55, TIC110/IEP110 and CLPC. As to expression, mostly expressed in young leaves, also present in old leaves, roots and stems (at protein level).

The protein resides in the plastid. The protein localises to the chloroplast outer membrane. Functionally, mediates the insertion of proteins targeted to the outer membrane of chloroplasts. Required for the import of protein precursors into chloroplasts. Forms the voltage-dependent preprotein translocation channels (hydrophilic beta barrel) of the TOC complex in the chloroplastic outer membrane. The narrowest inner diameter of this channel is approximately 14 Angstroms. This chain is Protein TOC75, chloroplastic (TOC75), found in Pisum sativum (Garden pea).